Consider the following 463-residue polypeptide: Tryprostatin B synthase (463 aa).

2 residues coordinate brevianamide F: M93 and E101. R112, K200, and Y202 together coordinate dimethylallyl diphosphate. Y204 is a binding site for brevianamide F. Positions 293, 295, 379, 381, 445, and 449 each coordinate dimethylallyl diphosphate.

It belongs to the tryptophan dimethylallyltransferase family.

It carries out the reaction brevianamide F + dimethylallyl diphosphate = tryprostatin B + diphosphate. It participates in mycotoxin biosynthesis. Brevianamide F prenyltransferase; part of the gene cluster that mediates the biosynthesis of fumitremorgins, indole alkaloids that carry not only intriguing chemical structures, but also interesting biological and pharmacological activities. The biosynthesis of fumitremorgin-type alkaloids begins by condensation of the two amino acids L-tryptophan and L-proline to brevianamide F, catalyzed by the non-ribosomal peptide synthetase ftmPS/ftmA. Brevianamide F is then prenylated by the prenyltransferase ftmPT1/ftmB in the presence of dimethylallyl diphosphate, resulting in the formation of tryprostatin B. The three cytochrome P450 monooxygenases, ftmP450-1/ftmC, ftmP450-2/ftmE and ftmP450-3/FtmG, are responsible for the conversion of tryprostatin B to 6-hydroxytryprostatin B, tryprostatin A to fumitremorgin C and fumitremorgin C to 12,13-dihydroxyfumitremorgin C, respectively. The putative methyltransferase ftmMT/ftmD is expected for the conversion of 6-hydroxytryprostatin B to tryprostatin A. FtmPT2/FtmH catalyzes the prenylation of 12,13-dihydroxyfumitre-morgin C in the presence of dimethylallyl diphosphate, resulting in the formation of fumitremorgin B. Fumitremorgin B is further converted to verruculogen by ftmOx1/ftmF via the insertion of an endoperoxide bond between the two prenyl moieties. Finally, verruculogen is further converted to fumitremorgin A by the verruculogen prenyltransferase ftmPT3. The polypeptide is Tryprostatin B synthase (Neosartorya fischeri (strain ATCC 1020 / DSM 3700 / CBS 544.65 / FGSC A1164 / JCM 1740 / NRRL 181 / WB 181) (Aspergillus fischerianus)).